The following is a 233-amino-acid chain: Nickel import system ATP-binding protein NikE (233 aa).

An ABC transporter domain is found at 2–228; the sequence is IELKHVTFGY…DRHPYTKELV (227 aa). Position 35-42 (35-42) interacts with ATP; that stretch reads GESGCGKS.

Belongs to the ABC transporter superfamily. In terms of assembly, the complex is composed of two ATP-binding proteins (NikD and NikE), two transmembrane proteins (NikB and NikC) and a solute-binding protein (NikA).

The protein localises to the cell membrane. It carries out the reaction Ni(2+)(out) + ATP + H2O = Ni(2+)(in) + ADP + phosphate + H(+). Part of the ABC transporter complex NikABCDE (Opp2) involved in nickel import. Probably responsible for energy coupling to the transport system. The protein is Nickel import system ATP-binding protein NikE of Staphylococcus aureus (strain Mu50 / ATCC 700699).